The sequence spans 203 residues: tRNA (cytidine(56)-2'-O)-methyltransferase (203 aa).

S-adenosyl-L-methionine contacts are provided by residues L80, 109–113, and 127–134; these read GAEKV and IGNQPHSE. The tract at residues 178 to 203 is disordered; the sequence is AEQDKAEGKATPGKNWENSGFTGDNP. The segment covering 193–203 has biased composition (polar residues); it reads WENSGFTGDNP.

Belongs to the aTrm56 family. In terms of assembly, homodimer.

It is found in the cytoplasm. The enzyme catalyses cytidine(56) in tRNA + S-adenosyl-L-methionine = 2'-O-methylcytidine(56) in tRNA + S-adenosyl-L-homocysteine + H(+). Functionally, specifically catalyzes the AdoMet-dependent 2'-O-ribose methylation of cytidine at position 56 in tRNAs. In Pyrococcus horikoshii (strain ATCC 700860 / DSM 12428 / JCM 9974 / NBRC 100139 / OT-3), this protein is tRNA (cytidine(56)-2'-O)-methyltransferase.